Reading from the N-terminus, the 195-residue chain is Large ribosomal subunit protein bL32m (195 aa).

Zn(2+)-binding residues include cysteine 95, cysteine 98, cysteine 108, and cysteine 111.

Belongs to the bacterial ribosomal protein bL32 family. Component of the mitochondrial large ribosomal subunit (mt-LSU).

The protein localises to the mitochondrion. Its function is as follows. Component of the mitochondrial large ribosomal subunit (mt-LSU). The mitochondrial ribosome (mitoribosome) is a large ribonucleoprotein complex responsible for the synthesis of proteins inside mitochondria. This chain is Large ribosomal subunit protein bL32m (mRpL32), found in Drosophila melanogaster (Fruit fly).